We begin with the raw amino-acid sequence, 338 residues long: Citramalyl-CoA lyase, mitochondrial (338 aa).

A mitochondrion-targeting transit peptide spans 1 to 20 (MALCVLQNAVRGAAALPRLK). Substrate is bound by residues Tyr48, Lys55, and Lys59. Residues Lys55, Lys59, and Lys64 each carry the N6-acetyllysine modification. N6-acetyllysine; alternate occurs at positions 80 and 90. 2 positions are modified to N6-succinyllysine; alternate: Lys80 and Lys90. Residue Arg105 coordinates substrate. 2 residues coordinate Mg(2+): Glu169 and Asp204. Residue 270–271 (IH) coordinates substrate. An N6-succinyllysine modification is found at Lys307. Asp318 is an active-site residue.

The protein belongs to the HpcH/HpaI aldolase family. Citrate lyase beta subunit-like subfamily. Homotrimer. It depends on Mg(2+) as a cofactor.

Its subcellular location is the mitochondrion. The catalysed reaction is glyoxylate + acetyl-CoA + H2O = (S)-malate + CoA + H(+). It catalyses the reaction propanoyl-CoA + glyoxylate + H2O = 3-methylmalate + CoA + H(+). It carries out the reaction (3S)-citramalyl-CoA = pyruvate + acetyl-CoA. The enzyme catalyses (S)-malyl-CoA + H2O = (S)-malate + CoA + H(+). Functionally, mitochondrial citramalyl-CoA lyase indirectly involved in the vitamin B12 metabolism. Converts citramalyl-CoA into acetyl-CoA and pyruvate in the C5-dicarboxylate catabolism pathway. The C5-dicarboxylate catabolism pathway is required to detoxify itaconate, a vitamin B12-poisoning metabolite. Also acts as a malate synthase in vitro, converting glyoxylate and acetyl-CoA to malate. Also displays malyl-CoA thioesterase activity. Also acts as a beta-methylmalate synthase in vitro, by mediating conversion of glyoxylate and propionyl-CoA to beta-methylmalate. Also has very weak citramalate synthase activity in vitro. The polypeptide is Citramalyl-CoA lyase, mitochondrial (Clybl) (Rattus norvegicus (Rat)).